Here is a 213-residue protein sequence, read N- to C-terminus: Urease accessory protein UreE (213 aa).

A disordered region spans residues 170 to 213; it reads EHHGHSHSHSHSHSHDHDHDHDHDHDHDHQHGPSCSHGHHHGHR. Basic and acidic residues predominate over residues 182–200; that stretch reads HSHDHDHDHDHDHDHDHQH.

The protein belongs to the UreE family.

The protein resides in the cytoplasm. Its function is as follows. Involved in urease metallocenter assembly. Binds nickel. Probably functions as a nickel donor during metallocenter assembly. This Burkholderia mallei (strain NCTC 10229) protein is Urease accessory protein UreE.